Reading from the N-terminus, the 317-residue chain is Probable cell division protein WhiA (317 aa).

A DNA-binding region (H-T-H motif) is located at residues 276–310 (TLKELGEMVSGGKISKSGINHRLRKIDDIAEKLRA).

The protein belongs to the WhiA family.

Involved in cell division and chromosome segregation. In Bacillus thuringiensis (strain Al Hakam), this protein is Probable cell division protein WhiA.